The following is a 233-amino-acid chain: Small ribosomal subunit protein uS2 (233 aa).

It belongs to the universal ribosomal protein uS2 family.

The protein is Small ribosomal subunit protein uS2 of Bacillus cereus (strain G9842).